The following is a 298-amino-acid chain: MFSRAGVAGLSAWTVQPQWIQVRNMATLKDITRRLKSIKNIQKITKSMKMVAAAKYARAERELKPARVYGVGSLALYEKADIKTPEDKKKHLIIGVSSDRGLCGAIHSSVAKQMKSEAANLAAAGKEVKIIGVGDKIRSILHRTHSDQFLVTFKEVGRRPPTFGDASVIALELLNSGYEFDEGSIIFNRFRSVISYKTEEKPIFSLDTISSAESMSIYDDIDADVLRNYQEYSLANIIYYSLKESTTSEQSARMTAMDNASKNASEMIDKLTLTFNRTRQAVITKELIEIISGAAALD.

A mitochondrion-targeting transit peptide spans 1–25; that stretch reads MFSRAGVAGLSAWTVQPQWIQVRNM. Lys39 bears the N6-acetyllysine mark. Lys49 carries the N6-succinyllysine modification. The residue at position 55 (Lys55) is an N6-acetyllysine. Lys115 bears the N6-acetyllysine; alternate mark. Lys115 carries the post-translational modification N6-succinyllysine; alternate. Ser146 bears the Phosphoserine mark. Lys154 carries the post-translational modification N6-acetyllysine; alternate. Lys154 is modified (N6-succinyllysine; alternate). N6-acetyllysine is present on Lys197. Residue Lys270 is modified to N6-succinyllysine.

The protein belongs to the ATPase gamma chain family. Component of the ATP synthase complex composed at least of ATP5F1A/subunit alpha, ATP5F1B/subunit beta, ATP5MC1/subunit c (homooctomer), MT-ATP6/subunit a, MT-ATP8/subunit 8, ATP5ME/subunit e, ATP5MF/subunit f, ATP5MG/subunit g, ATP5MK/subunit k, ATP5MJ/subunit j, ATP5F1C/subunit gamma, ATP5F1D/subunit delta, ATP5F1E/subunit epsilon, ATP5PF/subunit F6, ATP5PB/subunit b, ATP5PD/subunit d, ATP5PO/subunit OSCP. ATP synthase complex consists of a soluble F(1) head domain (subunits alpha(3) and beta(3)) - the catalytic core - and a membrane F(0) domain - the membrane proton channel (subunits c, a, 8, e, f, g, k and j). These two domains are linked by a central stalk (subunits gamma, delta, and epsilon) rotating inside the F1 region and a stationary peripheral stalk (subunits F6, b, d, and OSCP). Interacts with FLVCR2; this interaction occurs in the absence of heme and is disrupted upon heme binding.

Its subcellular location is the mitochondrion inner membrane. Its function is as follows. Subunit gamma, of the mitochondrial membrane ATP synthase complex (F(1)F(0) ATP synthase or Complex V) that produces ATP from ADP in the presence of a proton gradient across the membrane which is generated by electron transport complexes of the respiratory chain. ATP synthase complex consist of a soluble F(1) head domain - the catalytic core - and a membrane F(1) domain - the membrane proton channel. These two domains are linked by a central stalk rotating inside the F(1) region and a stationary peripheral stalk. During catalysis, ATP synthesis in the catalytic domain of F(1) is coupled via a rotary mechanism of the central stalk subunits to proton translocation. In vivo, can only synthesize ATP although its ATP hydrolase activity can be activated artificially in vitro. With the central stalk subunit delta, is essential for the biogenesis of F(1) catalytic part of the ATP synthase complex namely in the formation of F1 assembly intermediate. The protein is ATP synthase F(1) complex subunit gamma, mitochondrial of Bos taurus (Bovine).